We begin with the raw amino-acid sequence, 93 residues long: UPF0058 protein AF_0738 (93 aa).

This sequence belongs to the UPF0058 family.

The chain is UPF0058 protein AF_0738 from Archaeoglobus fulgidus (strain ATCC 49558 / DSM 4304 / JCM 9628 / NBRC 100126 / VC-16).